A 541-amino-acid polypeptide reads, in one-letter code: Chaperonin GroEL (541 aa).

Residues 29–32, 86–90, Gly413, 478–480, and Asp494 each bind ATP; these read TIGP, DGTTT, and NAA.

It belongs to the chaperonin (HSP60) family. In terms of assembly, forms a cylinder of 14 subunits composed of two heptameric rings stacked back-to-back. Interacts with the co-chaperonin GroES.

It is found in the cytoplasm. The enzyme catalyses ATP + H2O + a folded polypeptide = ADP + phosphate + an unfolded polypeptide.. Together with its co-chaperonin GroES, plays an essential role in assisting protein folding. The GroEL-GroES system forms a nano-cage that allows encapsulation of the non-native substrate proteins and provides a physical environment optimized to promote and accelerate protein folding. The sequence is that of Chaperonin GroEL from Oenococcus oeni (strain ATCC BAA-331 / PSU-1).